The primary structure comprises 426 residues: Serine--tRNA ligase (426 aa).

231 to 233 (TSE) is a binding site for L-serine. Position 262–264 (262–264 (RSE)) interacts with ATP. E285 contacts L-serine. 349–352 (EISS) provides a ligand contact to ATP. An L-serine-binding site is contributed by S385.

This sequence belongs to the class-II aminoacyl-tRNA synthetase family. Type-1 seryl-tRNA synthetase subfamily. Homodimer. The tRNA molecule binds across the dimer.

It is found in the cytoplasm. It carries out the reaction tRNA(Ser) + L-serine + ATP = L-seryl-tRNA(Ser) + AMP + diphosphate + H(+). It catalyses the reaction tRNA(Sec) + L-serine + ATP = L-seryl-tRNA(Sec) + AMP + diphosphate + H(+). The protein operates within aminoacyl-tRNA biosynthesis; selenocysteinyl-tRNA(Sec) biosynthesis; L-seryl-tRNA(Sec) from L-serine and tRNA(Sec): step 1/1. Functionally, catalyzes the attachment of serine to tRNA(Ser). Is also able to aminoacylate tRNA(Sec) with serine, to form the misacylated tRNA L-seryl-tRNA(Sec), which will be further converted into selenocysteinyl-tRNA(Sec). This is Serine--tRNA ligase from Legionella pneumophila (strain Corby).